We begin with the raw amino-acid sequence, 84 residues long: Conotoxin Tx8.1 (84 aa).

Positions 1–19 (LKMGAMFVLLLLFTLASSH) are cleaved as a signal peptide. A propeptide spanning residues 20–44 (REGDIQARKTHLKSDFYRTLPRFAR) is cleaved from the precursor.

The protein belongs to the conotoxin S superfamily. In terms of processing, contains 5 disulfide bonds. As to expression, expressed by the venom duct.

The protein resides in the secreted. This Conus textile (Cloth-of-gold cone) protein is Conotoxin Tx8.1.